The following is a 180-amino-acid chain: Lipid droplet coating protein Cap20 (180 aa).

This sequence belongs to the perilipin family. In terms of assembly, interacts with class I hydrophobin Hydr1. Interacts also with the cAMP-dependent protein kinase catalytic subunit PkaC1.

It localises to the lipid droplet. In terms of biological role, lipid droplet coating protein that regulates lipid metabolism, appressorial turgor pressure, and virulence. Mature appressoria with high turgor pressure are essential to penetrate the leaf surface. The chain is Lipid droplet coating protein Cap20 from Colletotrichum siamense (Anthracnose fungus).